A 182-amino-acid polypeptide reads, in one-letter code: Hypoxanthine/guanine phosphoribosyltransferase (182 aa).

Belongs to the purine/pyrimidine phosphoribosyltransferase family. Archaeal HPRT subfamily. Homodimer.

The protein resides in the cytoplasm. The catalysed reaction is IMP + diphosphate = hypoxanthine + 5-phospho-alpha-D-ribose 1-diphosphate. It catalyses the reaction GMP + diphosphate = guanine + 5-phospho-alpha-D-ribose 1-diphosphate. It functions in the pathway purine metabolism; IMP biosynthesis via salvage pathway; IMP from hypoxanthine: step 1/1. Catalyzes a salvage reaction resulting in the formation of IMP that is energically less costly than de novo synthesis. The sequence is that of Hypoxanthine/guanine phosphoribosyltransferase from Methanospirillum hungatei JF-1 (strain ATCC 27890 / DSM 864 / NBRC 100397 / JF-1).